We begin with the raw amino-acid sequence, 371 residues long: Ferrochelatase (371 aa).

His-218 and Glu-299 together coordinate Fe cation.

The protein belongs to the ferrochelatase family.

Its subcellular location is the cytoplasm. The enzyme catalyses heme b + 2 H(+) = protoporphyrin IX + Fe(2+). It participates in porphyrin-containing compound metabolism; protoheme biosynthesis; protoheme from protoporphyrin-IX: step 1/1. Its function is as follows. Catalyzes the ferrous insertion into protoporphyrin IX. The sequence is that of Ferrochelatase from Cupriavidus necator (strain ATCC 17699 / DSM 428 / KCTC 22496 / NCIMB 10442 / H16 / Stanier 337) (Ralstonia eutropha).